The primary structure comprises 156 residues: EPIDERMAL PATTERNING FACTOR-like protein 6 (156 aa).

The signal sequence occupies residues 1–47 (MGFERTSSSLSLLSSSLPSSLQPSENTRAKFSLFYLLLLFFVLCVIA). 3 disulfide bridges follow: cysteine 113–cysteine 147, cysteine 117–cysteine 123, and cysteine 120–cysteine 149.

It belongs to the plant cysteine rich small secretory peptide family. Epidermal patterning factor subfamily. In terms of assembly, interacts with ERECTA. Expressed in the internal layers of the root, hypocotyl and stems, and in the midrib of developing rosette leaves. Detected in a ring of cells surrounding the vascular elements. Expressed in developing stems soon after bolting, in inflorescence stems, near the root apex and in the chalazal region of ovules. Not found in cotyledons or in stomatal precursors or stomata.

The protein resides in the secreted. In terms of biological role, acts primarily as positive regulator of inflorescence growth. Endodermal expression is sufficient for proper inflorescence architecture. Redundantly involved with EPFL4 in procambial development regulation. Also acts as tissue-specific regulator of epidermal pattern. Controls stomatal patterning by repressing stomatal production. TMM (AC Q9SSD1) functions to dampen or block CHAL signaling. Not processed by SDD1 (AC O64495). Acts as growth-regulatory ligand for ERECTA family receptors. This is EPIDERMAL PATTERNING FACTOR-like protein 6 from Arabidopsis thaliana (Mouse-ear cress).